Reading from the N-terminus, the 101-residue chain is Putative regulatory protein Csac_2087 (101 aa).

The protein belongs to the RemA family.

The chain is Putative regulatory protein Csac_2087 from Caldicellulosiruptor saccharolyticus (strain ATCC 43494 / DSM 8903 / Tp8T 6331).